The following is a 752-amino-acid chain: Probable cell surface ferric reductase kap2 (752 aa).

Residues 40-60 (GKYGLGWVYFSVILLAISTII) form a helical membrane-spanning segment. 2 N-linked (GlcNAc...) asparagine glycosylation sites follow: asparagine 118 and asparagine 133. 2 helical membrane-spanning segments follow: residues 157–177 (IGFPSLGASSIILAALIFVTL) and 195–215 (PPLAIRAGMIAVAMIPWIIAL). The 148-residue stretch at 201 to 348 (AGMIAVAMIP…WATVAIWMLS (148 aa)) folds into the Ferric oxidoreductase domain. Heme is bound by residues histidine 237 and histidine 251. 3 consecutive transmembrane segments (helical) span residues 241-261 (GYLCLFLSLIHMVPFYVTPIW), 281-301 (GTGWAALVPLIVLCLHSLPIL), and 306-326 (YELFKLVHLPLSIIFLAMIFW). The heme site is built by histidine 313 and histidine 327. Residues 331 to 351 (FLASWDYLWATVAIWMLSYAV) form a helical membrane-spanning segment. The FAD-binding FR-type domain maps to 349–475 (YAVRLFYVNW…EGPYGGMKRD (127 aa)). An N-linked (GlcNAc...) asparagine glycan is attached at asparagine 357. Residue 467 to 470 (GPYG) participates in NADP(+) binding. The chain crosses the membrane as a helical span at residues 482–502 (VVFFAGGSGITATASHLLNLI). Asparagine 627 is a glycosylation site (N-linked (GlcNAc...) asparagine). Position 714-715 (714-715 (CG)) interacts with NADP(+).

This sequence belongs to the ferric reductase (FRE) family. Requires FAD as cofactor. The cofactor is heme.

The protein resides in the cell membrane. The enzyme catalyses 2 a Fe(II)-siderophore + NADP(+) + H(+) = 2 a Fe(III)-siderophore + NADPH. Probable cell surface ferric reductase that acts as a negative regulatory factor of growth and development. Involved in kojic acid production through the regulation of kojA expression. This Aspergillus oryzae (strain ATCC 42149 / RIB 40) (Yellow koji mold) protein is Probable cell surface ferric reductase kap2.